The following is a 254-amino-acid chain: 5-oxoprolinase subunit A (254 aa).

The protein belongs to the LamB/PxpA family. Forms a complex composed of PxpA, PxpB and PxpC.

The enzyme catalyses 5-oxo-L-proline + ATP + 2 H2O = L-glutamate + ADP + phosphate + H(+). Catalyzes the cleavage of 5-oxoproline to form L-glutamate coupled to the hydrolysis of ATP to ADP and inorganic phosphate. The polypeptide is 5-oxoprolinase subunit A (Burkholderia mallei (strain NCTC 10247)).